The sequence spans 529 residues: Autoinducer-2 kinase (529 aa).

It belongs to the FGGY kinase family.

The protein localises to the cytoplasm. It carries out the reaction (S)-4,5-dihydroxypentane-2,3-dione + ATP = (2S)-2-hydroxy-3,4-dioxopentyl phosphate + ADP + H(+). In terms of biological role, catalyzes the phosphorylation of autoinducer-2 (AI-2) to phospho-AI-2, which subsequently inactivates the transcriptional regulator LsrR and leads to the transcription of the lsr operon. Phosphorylates the ring-open form of (S)-4,5-dihydroxypentane-2,3-dione (DPD), which is the precursor to all AI-2 signaling molecules, at the C5 position. The protein is Autoinducer-2 kinase of Yersinia enterocolitica serotype O:8 / biotype 1B (strain NCTC 13174 / 8081).